Consider the following 146-residue polypeptide: uncharacterized protein (146 aa).

To E.coli YmfS.

This is an uncharacterized protein from Escherichia coli (strain K12).